Here is a 333-residue protein sequence, read N- to C-terminus: MTGRFVRDQSAMTKAIASSGKAGQETTKQTTSAEKLESENALLSTVKEMNQGWMSRLGAGNDYDETEADPADTYGDTEADLPPTIKPEHIKKETRKQDKALGIKNVAGTSESERKALKQWDEDENKSDTEKLAFLAGFRYRQDHNSVVLRAQTEQLKSLVDILTSSATSVSRAASDIVNATTMSTSKLAAAITKHIEVPPHETLTKIEMPKLPLISSEAGSISGVKSVDGKSVDEEIIDSNKKESTRIKEEAKTPKPQIVTPPVIDSGPIITVGQMASVLGGEVKDILEFYEIGMEKFESVAKDLGLSYEGLLRKYGGLSGLKGTLKKKINLL.

Disordered regions lie at residues 1 to 41 (MTGR…SENA) and 57 to 84 (LGAG…LPPT). The segment covering 24–33 (QETTKQTTSA) has biased composition (polar residues). Acidic residues predominate over residues 62 to 79 (DYDETEADPADTYGDTEA).

This is Protein 2 from Lactuca sativa (Garden lettuce).